Consider the following 599-residue polypeptide: Elongation factor 4 (599 aa).

The tr-type G domain maps to 2-184 (KNIRNFSIIA…RLVRDIPPPE (183 aa)). GTP is bound by residues 14-19 (DHGKST) and 131-134 (NKID).

The protein belongs to the TRAFAC class translation factor GTPase superfamily. Classic translation factor GTPase family. LepA subfamily.

It is found in the cell inner membrane. The enzyme catalyses GTP + H2O = GDP + phosphate + H(+). Its function is as follows. Required for accurate and efficient protein synthesis under certain stress conditions. May act as a fidelity factor of the translation reaction, by catalyzing a one-codon backward translocation of tRNAs on improperly translocated ribosomes. Back-translocation proceeds from a post-translocation (POST) complex to a pre-translocation (PRE) complex, thus giving elongation factor G a second chance to translocate the tRNAs correctly. Binds to ribosomes in a GTP-dependent manner. The sequence is that of Elongation factor 4 from Klebsiella pneumoniae (strain 342).